Here is a 351-residue protein sequence, read N- to C-terminus: ADP-glucose phosphorylase (351 aa).

The interval 1–63 (MTSPSHASDR…QNPNPKPSSC (63 aa)) is disordered. 41 to 44 (RAKR) provides a ligand contact to ADP-alpha-D-glucose. Zn(2+) contacts are provided by C63 and C66. ADP-alpha-D-glucose contacts are provided by residues 72-74 (ECA) and N94. Residue H133 participates in Zn(2+) binding. ADP-alpha-D-glucose is bound by residues N173 and 179 to 182 (GASM). Position 184 (H184) interacts with Zn(2+). H186 (tele-AMP-histidine intermediate) is an active-site residue. Q188 is a binding site for ADP-alpha-D-glucose. Zn(2+) contacts are provided by C216, C219, H255, and H310. ADP-alpha-D-glucose is bound by residues G321 and 325-326 (FE).

It belongs to the galactose-1-phosphate uridylyltransferase type 1 family. As to quaternary structure, homodimer. Zn(2+) serves as cofactor.

It carries out the reaction alpha-D-glucose 1-phosphate + ADP + H(+) = ADP-alpha-D-glucose + phosphate. Its function is as follows. Catalyzes the conversion of ADP-glucose and inorganic phosphate (Pi) into glucose-1-phosphate and ADP. Does not possess galactose-1-phosphate uridylyltransferase activity. This Arabidopsis thaliana (Mouse-ear cress) protein is ADP-glucose phosphorylase.